A 571-amino-acid polypeptide reads, in one-letter code: Urease subunit alpha (571 aa).

Positions 132-571 constitute a Urease domain; the sequence is GGIDSHIHFI…LPMAQRYFLF (440 aa). 3 residues coordinate Ni(2+): His137, His139, and Lys220. Position 220 is an N6-carboxylysine (Lys220). His222 lines the substrate pocket. Ni(2+) contacts are provided by His249 and His275. Residue His323 is the Proton donor of the active site. Asp363 lines the Ni(2+) pocket.

It belongs to the metallo-dependent hydrolases superfamily. Urease alpha subunit family. Heterotrimer of UreA (gamma), UreB (beta) and UreC (alpha) subunits. Three heterotrimers associate to form the active enzyme. Ni cation is required as a cofactor. In terms of processing, carboxylation allows a single lysine to coordinate two nickel ions.

It localises to the cytoplasm. It catalyses the reaction urea + 2 H2O + H(+) = hydrogencarbonate + 2 NH4(+). It participates in nitrogen metabolism; urea degradation; CO(2) and NH(3) from urea (urease route): step 1/1. The sequence is that of Urease subunit alpha from Kocuria rhizophila (strain ATCC 9341 / DSM 348 / NBRC 103217 / DC2201).